The following is a 377-amino-acid chain: Pseudouridylate synthase RPUSD4, mitochondrial (377 aa).

Positions 51–70 (LRAQKQQQKTKEPAPTNPVQ) are disordered. Asp-153 is a catalytic residue.

The protein belongs to the pseudouridine synthase RluA family. As to quaternary structure, interacts with 16S mt-rRNA, mt-tRNA(Phe) and mt-tRNA(Met). Forms a regulatory protein-RNA complex, consisting of RCC1L, NGRN, RPUSD3, RPUSD4, TRUB2, FASTKD2 and 16S mt-rRNA.

The protein localises to the mitochondrion matrix. Its subcellular location is the nucleus. The protein resides in the cytoplasm. The catalysed reaction is uridine in 5S rRNA = pseudouridine in 5S rRNA. The enzyme catalyses a uridine in tRNA = a pseudouridine in tRNA. It carries out the reaction a uridine in mRNA = a pseudouridine in mRNA. Its function is as follows. Catalyzes uridine to pseudouridine isomerization (pseudouridylation) of different mitochondrial RNA substrates. Acts on position 1397 in 16S mitochondrial ribosomal RNA (16S mt-rRNA). This modification is required for the assembly of 16S mt-rRNA into a functional mitochondrial ribosome. As a component of a functional protein-RNA module, consisting of RCC1L, NGRN, RPUSD3, RPUSD4, TRUB2, FASTKD2 and 16S mt-rRNA, controls 16S mt-rRNA abundance and is required for intra-mitochondrial translation. Acts on position 39 in mitochondrial tRNA(Phe). Also catalyzes pseudouridylation of mRNAs in nucleus: acts as a regulator of pre-mRNA splicing by mediating pseudouridylation of pre-mRNAs at locations associated with alternatively spliced regions. Pseudouridylation of pre-mRNAs near splice sites directly regulates mRNA splicing and mRNA 3'-end processing. In Bos taurus (Bovine), this protein is Pseudouridylate synthase RPUSD4, mitochondrial.